Here is a 106-residue protein sequence, read N- to C-terminus: Somatoliberin (106 aa).

The first 19 residues, 1–19 (MLLWVFFLVTLTLSSGSHG), serve as a signal peptide directing secretion. A propeptide spanning residues 20-30 (SLPSQPLRIPR) is cleaved from the precursor. L74 is modified (leucine amide). Residues 77–106 (QVDGVWTDQQQMALESTLVSLLQERRNSQG) constitute a propeptide that is removed on maturation.

The protein belongs to the glucagon family.

Its subcellular location is the secreted. In terms of biological role, GRF is released by the hypothalamus and acts on the adenohypophyse to stimulate the secretion of growth hormone. This chain is Somatoliberin (GHRH), found in Bos taurus (Bovine).